Here is a 183-residue protein sequence, read N- to C-terminus: Large ribosomal subunit protein uL5 (183 aa).

It belongs to the universal ribosomal protein uL5 family. In terms of assembly, part of the 50S ribosomal subunit; contacts the 5S rRNA and probably tRNA. Forms a bridge to the 30S subunit in the 70S ribosome.

In terms of biological role, this is one of the proteins that bind and probably mediate the attachment of the 5S RNA into the large ribosomal subunit, where it forms part of the central protuberance. In the 70S ribosome it contacts protein S13 of the 30S subunit (bridge B1b), connecting the 2 subunits; this bridge is implicated in subunit movement. May contact the P site tRNA; the 5S rRNA and some of its associated proteins might help stabilize positioning of ribosome-bound tRNAs. The chain is Large ribosomal subunit protein uL5 from Thermococcus kodakarensis (strain ATCC BAA-918 / JCM 12380 / KOD1) (Pyrococcus kodakaraensis (strain KOD1)).